The sequence spans 164 residues: RNA pyrophosphohydrolase (164 aa).

The Nudix hydrolase domain maps to 8 to 153 (PYRSNVGAAL…KRPIYERLAR (146 aa)). The Nudix box motif lies at 45–66 (GGIDGDEDPAAAVLRELDEEIG).

This sequence belongs to the Nudix hydrolase family. RppH subfamily. Requires a divalent metal cation as cofactor.

Its function is as follows. Accelerates the degradation of transcripts by removing pyrophosphate from the 5'-end of triphosphorylated RNA, leading to a more labile monophosphorylated state that can stimulate subsequent ribonuclease cleavage. The chain is RNA pyrophosphohydrolase from Acidiphilium cryptum (strain JF-5).